A 372-amino-acid chain; its full sequence is Bifunctional enzyme IspD/IspF (372 aa).

Residues 1–211 (MLDISLIMLG…SALKAPENEL (211 aa)) are 2-C-methyl-D-erythritol 4-phosphate cytidylyltransferase. The 2-C-methyl-D-erythritol 2,4-cyclodiphosphate synthase stretch occupies residues 212–372 (FVGSGFDVHE…SLKFYNWTQI (161 aa)). Aspartate 218 and histidine 220 together coordinate a divalent metal cation. 4-CDP-2-C-methyl-D-erythritol 2-phosphate-binding positions include 218–220 (DVH) and 244–245 (HS). Position 252 (histidine 252) interacts with a divalent metal cation. 4-CDP-2-C-methyl-D-erythritol 2-phosphate contacts are provided by residues 266–268 (DIG), 271–275 (FPDTD), 342–345 (TTTE), phenylalanine 349, and arginine 352.

In the N-terminal section; belongs to the IspD/TarI cytidylyltransferase family. IspD subfamily. This sequence in the C-terminal section; belongs to the IspF family. The cofactor is a divalent metal cation.

It catalyses the reaction 2-C-methyl-D-erythritol 4-phosphate + CTP + H(+) = 4-CDP-2-C-methyl-D-erythritol + diphosphate. The catalysed reaction is 4-CDP-2-C-methyl-D-erythritol 2-phosphate = 2-C-methyl-D-erythritol 2,4-cyclic diphosphate + CMP. It functions in the pathway isoprenoid biosynthesis; isopentenyl diphosphate biosynthesis via DXP pathway; isopentenyl diphosphate from 1-deoxy-D-xylulose 5-phosphate: step 2/6. Its pathway is isoprenoid biosynthesis; isopentenyl diphosphate biosynthesis via DXP pathway; isopentenyl diphosphate from 1-deoxy-D-xylulose 5-phosphate: step 4/6. In terms of biological role, bifunctional enzyme that catalyzes the formation of 4-diphosphocytidyl-2-C-methyl-D-erythritol from CTP and 2-C-methyl-D-erythritol 4-phosphate (MEP) (IspD), and catalyzes the conversion of 4-diphosphocytidyl-2-C-methyl-D-erythritol 2-phosphate (CDP-ME2P) to 2-C-methyl-D-erythritol 2,4-cyclodiphosphate (ME-CPP) with a corresponding release of cytidine 5-monophosphate (CMP) (IspF). The chain is Bifunctional enzyme IspD/IspF from Campylobacter concisus (strain 13826).